The primary structure comprises 1082 residues: Importin-4 (1082 aa).

Met1 carries the N-acetylmethionine modification. An Importin N-terminal domain is found at 24–90 (ATEQLQTILR…KSLVLTALQK (67 aa)). HEAT repeat units lie at residues 348 to 385 (KLCP…GAGD), 390 to 427 (RLLY…NLQP), 431 to 471 (SYSE…NLGP), 475 to 513 (PYLP…AAQD), 896 to 933 (QFVS…HGGC), and 937 to 975 (DHFP…ASPV).

Belongs to the importin beta family. Found in a cytosolic complex with ASF1 (ASF1A or ASF1B) and histones H3 and H4.

The protein localises to the cytoplasm. Its subcellular location is the nucleus. Nuclear transport receptor that mediates nuclear import of proteins, such as histones, RPS3A, TNP2 and VDR. Serves as receptor for nuclear localization signals (NLS) in cargo substrates. Is thought to mediate docking of the importin/substrate complex to the nuclear pore complex (NPC) through binding to nucleoporin and the complex is subsequently translocated through the pore by an energy requiring, Ran-dependent mechanism. At the nucleoplasmic side of the NPC, Ran binds to the importin, the importin/substrate complex dissociates and importin is re-exported from the nucleus to the cytoplasm where GTP hydrolysis releases Ran. The directionality of nuclear import is thought to be conferred by an asymmetric distribution of the GTP- and GDP-bound forms of Ran between the cytoplasm and nucleus. Mediates the nuclear import of the histone H3-H4 dimer when in complex with ASF1 (ASF1A or ASF1B). Mediates the ligand-independent nuclear import of vitamin D receptor (VDR). The polypeptide is Importin-4 (Ipo4) (Mus musculus (Mouse)).